We begin with the raw amino-acid sequence, 558 residues long: Ribonuclease J (558 aa).

Zn(2+) is bound by residues His-81, His-83, Asp-85, His-86, His-148, and Asp-170. Residue 371–375 (HVSGH) coordinates substrate. Residue His-397 participates in Zn(2+) binding.

The protein belongs to the metallo-beta-lactamase superfamily. RNA-metabolizing metallo-beta-lactamase-like family. Bacterial RNase J subfamily. Homodimer. It depends on Zn(2+) as a cofactor.

Its subcellular location is the cytoplasm. In terms of biological role, an RNase that has endonuclease and 5'-3' exonuclease activity. The 5'-exonuclease activity acts on 5'-monophosphate but not 5'-triphosphate ends. Endonuclease activity can cleave within 4 nucleotides of the 5'-end of a triphosphorylated RNA. Plays the major role in pre-23S rRNA maturation, and a minor role in processing of pre-5S and pre-16S rRNA. The protein is Ribonuclease J of Mycolicibacterium smegmatis (strain ATCC 700084 / mc(2)155) (Mycobacterium smegmatis).